The chain runs to 770 residues: Kinesin-like protein klpA (770 aa).

A disordered region spans residues 1–152; it reads MENVQSRMQG…GLGKRGEWDQ (152 aa). Over residues 85-105 the composition is skewed to low complexity; that stretch reads SSTLTRSASAASRPRGPLSSS. Positions 106-119 are enriched in polar residues; sequence TSGRPKTSMSTSRR. The span at 134–152 shows a compositional bias: basic and acidic residues; the sequence is THQEERSYGGLGKRGEWDQ. Positions 175-425 form a coiled coil; the sequence is QESSGLKDAL…QELKGNIRVF (251 aa). A Kinesin motor domain is found at 421 to 756; the sequence is NIRVFCRVRP…LKFATKVHNT (336 aa). 514-521 serves as a coordination point for ATP; sequence GQTGSGKT.

The protein belongs to the TRAFAC class myosin-kinesin ATPase superfamily. Kinesin family. NCD subfamily.

It is found in the cytoplasm. It localises to the cytoskeleton. The protein is Kinesin-like protein klpA (klpA) of Emericella nidulans (strain FGSC A4 / ATCC 38163 / CBS 112.46 / NRRL 194 / M139) (Aspergillus nidulans).